A 412-amino-acid polypeptide reads, in one-letter code: Putative oxidoreductase bli-4, mitochondrial (412 aa).

Residues 1–55 constitute a mitochondrion transit peptide; the sequence is MSTKLCQRIARTATLSPTSLVPRSSRLIPIVSSAAVRPSSAIPTRRPFSTTESRY. 8 residues coordinate NADP(+): I108, N120, N186, Y269, K273, V308, T310, and Q312. The Proton donor role is filled by Y269. The active-site Lowers pKa of active site Tyr is K273.

Belongs to the short-chain dehydrogenases/reductases (SDR) family.

It localises to the mitochondrion. May play a role as an NAD-dependent dehydrogenase in the mitochondria. The protein is Putative oxidoreductase bli-4, mitochondrial (bli-4) of Neurospora crassa (strain ATCC 24698 / 74-OR23-1A / CBS 708.71 / DSM 1257 / FGSC 987).